Consider the following 370-residue polypeptide: Keratin-associated protein 10-7 (370 aa).

The 30 X 5 AA repeats of C-C-X(3) stretch occupies residues 36–363 (DCPESCCEPP…CSRPACCGPT (328 aa)). 30 consecutive repeat copies span residues 41-45 (CCEPP), 46-50 (CCAPA), 67-71 (CCRVT), 89-93 (CCQQS), 99-103 (CCASS), 109-113 (CCVPV), 114-118 (CCKTV), 119-123 (CCKPV), 135-139 (CCQQS), 145-149 (CCTSS), 155-159 (CCVPI), 160-164 (CCKPV), 172-176 (CCQQS), 186-190 (CCQAV), 208-212 (CCQQS), 218-222 (CCTSS), 228-232 (CCVPV), 233-237 (CCKPV), 238-242 (CCVPT), 250-254 (CCQPA), 255-259 (CCTSS), 265-269 (CCVPV), 270-274 (CCKPV), 275-279 (CCVPV), 287-291 (CCQQS), 297-301 (CCTTS), 302-306 (CCRPS), 321-325 (CCVPV), 339-343 (CCRPA), and 359-363 (CCGPT).

The protein belongs to the KRTAP type 10 family. Interacts with hair keratins. Restricted to a narrow region of the hair fiber cuticle, lying approximately 20 cell layers above the apex of the dermal papilla of the hair root; not detected in any other tissues.

In terms of biological role, in the hair cortex, hair keratin intermediate filaments are embedded in an interfilamentous matrix, consisting of hair keratin-associated proteins (KRTAP), which are essential for the formation of a rigid and resistant hair shaft through their extensive disulfide bond cross-linking with abundant cysteine residues of hair keratins. The matrix proteins include the high-sulfur and high-glycine-tyrosine keratins. In Homo sapiens (Human), this protein is Keratin-associated protein 10-7 (KRTAP10-7).